The primary structure comprises 229 residues: Peptidase E (229 aa).

Active-site charge relay system residues include S120, D135, and H157.

Belongs to the peptidase S51 family.

It is found in the cytoplasm. The catalysed reaction is Dipeptidase E catalyzes the hydrolysis of dipeptides Asp-|-Xaa. It does not act on peptides with N-terminal Glu, Asn or Gln, nor does it cleave isoaspartyl peptides.. Functionally, hydrolyzes dipeptides containing N-terminal aspartate residues. May play a role in allowing the cell to use peptide aspartate to spare carbon otherwise required for the synthesis of the aspartate family of amino acids. In Salmonella paratyphi A (strain AKU_12601), this protein is Peptidase E.